Reading from the N-terminus, the 382-residue chain is U11/U12 small nuclear ribonucleoprotein 59 kDa protein (382 aa).

A coiled-coil region spans residues 31-63 (NTKNITDQLKQLQDTLNLAKSMEKELEALKMIK). The segment at 274–297 (SEENTTLTTSNKTNNDTDKDSNTN) is disordered. Residues 277-287 (NTTLTTSNKTN) are compositionally biased toward low complexity.

Component of the U11/U12 snRNPs that are part of the U12-type spliceosome.

The protein resides in the nucleus. In Arabidopsis thaliana (Mouse-ear cress), this protein is U11/U12 small nuclear ribonucleoprotein 59 kDa protein (SNRNP59).